Consider the following 169-residue polypeptide: uncharacterized protein (169 aa).

The chain crosses the membrane as a helical span at residues 97–117 (IVIFCILVIVAFVIWLVVWLF). A disordered region spans residues 137–169 (NYSGLPTPQPTPTHYPAEQYSYDPARDRDNYRY). Residues 160–169 (PARDRDNYRY) are compositionally biased toward basic and acidic residues.

It is found in the membrane. This is an uncharacterized protein from Caenorhabditis elegans.